Reading from the N-terminus, the 334-residue chain is Fructose-1,6-bisphosphatase class 1 (334 aa).

4 residues coordinate Mg(2+): E90, D113, L115, and D116. Residues 116-119 (DGSS), N209, Y242, and K272 each bind substrate. E278 is a Mg(2+) binding site.

This sequence belongs to the FBPase class 1 family. As to quaternary structure, homotetramer. Mg(2+) serves as cofactor.

It localises to the cytoplasm. The enzyme catalyses beta-D-fructose 1,6-bisphosphate + H2O = beta-D-fructose 6-phosphate + phosphate. It functions in the pathway carbohydrate biosynthesis; gluconeogenesis. The polypeptide is Fructose-1,6-bisphosphatase class 1 (Actinobacillus succinogenes (strain ATCC 55618 / DSM 22257 / CCUG 43843 / 130Z)).